The chain runs to 376 residues: N-acetyldiaminopimelate deacetylase (376 aa).

Asp-69 is a catalytic residue. Glu-128 functions as the Proton acceptor in the catalytic mechanism.

The protein belongs to the peptidase M20A family. N-acetyldiaminopimelate deacetylase subfamily.

It catalyses the reaction N-acetyl-(2S,6S)-2,6-diaminopimelate + H2O = (2S,6S)-2,6-diaminopimelate + acetate. Its pathway is amino-acid biosynthesis; L-lysine biosynthesis via DAP pathway; LL-2,6-diaminopimelate from (S)-tetrahydrodipicolinate (acetylase route): step 3/3. In terms of biological role, catalyzes the conversion of N-acetyl-diaminopimelate to diaminopimelate and acetate. This chain is N-acetyldiaminopimelate deacetylase, found in Bacillus cereus (strain 03BB102).